The following is a 752-amino-acid chain: Myotubularin-related protein 10 (752 aa).

The Myotubularin phosphatase domain occupies 206 to 636; sequence FDCSSDWDRE…SHLSVWKLYF (431 aa). Residues 652–683 are a coiled coil; sequence TAFHKLSVLTDEIEMLQNQLRQYKGAAGTANT.

Belongs to the protein-tyrosine phosphatase family. Non-receptor class myotubularin subfamily.

The protein is Myotubularin-related protein 10 (mtmr10) of Danio rerio (Zebrafish).